Reading from the N-terminus, the 387-residue chain is UDP-N-acetylglucosamine--N-acetylmuramyl-(pentapeptide) pyrophosphoryl-undecaprenol N-acetylglucosamine transferase (387 aa).

The interval 1–22 is disordered; that stretch reads MSEHVRSAGPPQASTAPSGGSA. Residues 41 to 43, Asn-158, Arg-194, Ser-222, Ile-276, and Gln-321 each bind UDP-N-acetyl-alpha-D-glucosamine; that span reads TGG.

It belongs to the glycosyltransferase 28 family. MurG subfamily.

Its subcellular location is the cell inner membrane. The enzyme catalyses di-trans,octa-cis-undecaprenyl diphospho-N-acetyl-alpha-D-muramoyl-L-alanyl-D-glutamyl-meso-2,6-diaminopimeloyl-D-alanyl-D-alanine + UDP-N-acetyl-alpha-D-glucosamine = di-trans,octa-cis-undecaprenyl diphospho-[N-acetyl-alpha-D-glucosaminyl-(1-&gt;4)]-N-acetyl-alpha-D-muramoyl-L-alanyl-D-glutamyl-meso-2,6-diaminopimeloyl-D-alanyl-D-alanine + UDP + H(+). The protein operates within cell wall biogenesis; peptidoglycan biosynthesis. Functionally, cell wall formation. Catalyzes the transfer of a GlcNAc subunit on undecaprenyl-pyrophosphoryl-MurNAc-pentapeptide (lipid intermediate I) to form undecaprenyl-pyrophosphoryl-MurNAc-(pentapeptide)GlcNAc (lipid intermediate II). This is UDP-N-acetylglucosamine--N-acetylmuramyl-(pentapeptide) pyrophosphoryl-undecaprenol N-acetylglucosamine transferase from Polaromonas sp. (strain JS666 / ATCC BAA-500).